The primary structure comprises 197 residues: ATP-dependent Clp protease proteolytic subunit (197 aa).

Residue S98 is the Nucleophile of the active site. H123 is a catalytic residue.

Belongs to the peptidase S14 family. As to quaternary structure, fourteen ClpP subunits assemble into 2 heptameric rings which stack back to back to give a disk-like structure with a central cavity, resembling the structure of eukaryotic proteasomes.

The protein localises to the cytoplasm. The catalysed reaction is Hydrolysis of proteins to small peptides in the presence of ATP and magnesium. alpha-casein is the usual test substrate. In the absence of ATP, only oligopeptides shorter than five residues are hydrolyzed (such as succinyl-Leu-Tyr-|-NHMec, and Leu-Tyr-Leu-|-Tyr-Trp, in which cleavage of the -Tyr-|-Leu- and -Tyr-|-Trp bonds also occurs).. Cleaves peptides in various proteins in a process that requires ATP hydrolysis. Has a chymotrypsin-like activity. Plays a major role in the degradation of misfolded proteins. The chain is ATP-dependent Clp protease proteolytic subunit from Lysinibacillus sphaericus (strain C3-41).